The following is a 116-amino-acid chain: U16-barytoxin-Tl1d (116 aa).

Positions 1 to 20 are cleaved as a signal peptide; it reads MKTIIVFLSLLVLATKFGDA. A propeptide spanning residues 21–74 is cleaved from the precursor; the sequence is NEGVNQEQMKEVIQNEFREDFLNEMAAMSLLQQLEAIESTLLEKEADRNSRQKR. Disulfide bonds link Cys-75/Cys-90, Cys-82/Cys-95, and Cys-89/Cys-110.

This sequence belongs to the neurotoxin 14 (magi-1) family. 06 (ICK-Trit) subfamily. As to expression, expressed by the venom gland.

It localises to the secreted. Functionally, ion channel inhibitor. The sequence is that of U16-barytoxin-Tl1d from Trittame loki (Brush-footed trapdoor spider).